A 230-amino-acid polypeptide reads, in one-letter code: MNFWWLKFDDASTESLRNNIFTNNSITKNMRLNADTILNAQSYINPIGDRELNLRGLQIPVIENLGVTEDHYTSLDLSDNEIRVMGGFPRLETLRTLLLSKNRITQINDVKNIAKLETLVLTQNGIATLGALESLKSLVNLTAITLDGNPVQHVPRYRSYMISILPSLRMLDFQRVTQKERDEAEAMEFDVVPVTETDNLSAVDKAELRERLKNATTIQEIEEIEAMLKV.

5 LRR repeats span residues 15–36, 48–69, 71–92, 93–114, and 115–136; these read SLRN…NADT, GDRE…GVTE, HYTS…PRLE, TLRT…KNIA, and KLET…ESLK. Residues 149–187 enclose the LRRCT domain; it reads NPVQHVPRYRSYMISILPSLRMLDFQRVTQKERDEAEAM.

This sequence belongs to the U2 small nuclear ribonucleoprotein A family. In terms of assembly, associated with the spliceosome.

The protein resides in the nucleus. In terms of biological role, involved in pre-mRNA splicing. The chain is U2 small nuclear ribonucleoprotein A' (LEA1) from Yarrowia lipolytica (strain CLIB 122 / E 150) (Yeast).